We begin with the raw amino-acid sequence, 155 residues long: Small ribosomal subunit protein uS7c (155 aa).

This sequence belongs to the universal ribosomal protein uS7 family. As to quaternary structure, part of the 30S ribosomal subunit.

The protein localises to the plastid. Its subcellular location is the chloroplast. One of the primary rRNA binding proteins, it binds directly to 16S rRNA where it nucleates assembly of the head domain of the 30S subunit. This is Small ribosomal subunit protein uS7c (rps7) from Euonymus alatus (Burning bush).